The sequence spans 305 residues: 2-methoxy-6-polyprenyl-1,4-benzoquinol methylase, mitochondrial (305 aa).

A mitochondrion-targeting transit peptide spans 1 to 34 (MSRLRAPVAKFLADGLKGIRSTALAGSRLSNCRY). Residues Thr117, Asp143, and 173–174 (NA) each bind S-adenosyl-L-methionine.

This sequence belongs to the class I-like SAM-binding methyltransferase superfamily. MenG/UbiE family. Component of a multi-subunit COQ enzyme complex, composed of at least COQ3, COQ4, COQ5, COQ6, COQ7 and COQ9.

It localises to the mitochondrion inner membrane. The enzyme catalyses 2-methoxy-6-(all-trans-decaprenyl)benzene-1,4-diol + S-adenosyl-L-methionine = 5-methoxy-2-methyl-3-(all-trans-decaprenyl)benzene-1,4-diol + S-adenosyl-L-homocysteine + H(+). It participates in cofactor biosynthesis; ubiquinone biosynthesis. Functionally, methyltransferase required for the conversion of 2-decaprenyl-6-methoxy-1,4-benzoquinol (DDMQH2) to 2-decaprenyl-3-methyl-6-methoxy-1,4-benzoquinol (DMQH2). The chain is 2-methoxy-6-polyprenyl-1,4-benzoquinol methylase, mitochondrial from Schizosaccharomyces pombe (strain 972 / ATCC 24843) (Fission yeast).